The primary structure comprises 452 residues: Phosphoglucosamine mutase (452 aa).

Serine 101 acts as the Phosphoserine intermediate in catalysis. Mg(2+) is bound by residues serine 101, aspartate 241, aspartate 243, and aspartate 245. Residue serine 101 is modified to Phosphoserine.

Belongs to the phosphohexose mutase family. Mg(2+) serves as cofactor. Post-translationally, activated by phosphorylation.

The enzyme catalyses alpha-D-glucosamine 1-phosphate = D-glucosamine 6-phosphate. In terms of biological role, catalyzes the conversion of glucosamine-6-phosphate to glucosamine-1-phosphate. The polypeptide is Phosphoglucosamine mutase (Lactococcus lactis subsp. cremoris (strain SK11)).